The following is a 323-amino-acid chain: MTQLPPAIFLMGPTAAGKTDLAIELTKVLPCELISVDSALVYRGMDIGTAKPSRELLAQFPHRLIDILDPAESYSAADFRTDALAAMADITARGKIPLLVGGTMLYYKALLEGLADMPAADPQVRAELEEEAARLGWQALHDQLAAVDPESAARIHPNDPQRLTRALEVYRVSGLTMTAHRQRQLAQSTEAGASGRSQLPYTVANLAIAPANRQVLHQRIAQRFTQMLEQGFIDEVVALRSRSDLHAGLPSIRAVGYRQVWDHLDGKLTSAEMQERGIIATRQLAKRQFTWLRSWADLQWLDSLDCDNLPRALKYLGTISILS.

G12–T19 is a binding site for ATP. Residue T14 to T19 coordinates substrate. Interaction with substrate tRNA stretches follow at residues D37–L40 and Q161–R165.

It belongs to the IPP transferase family. Monomer. Requires Mg(2+) as cofactor.

The catalysed reaction is adenosine(37) in tRNA + dimethylallyl diphosphate = N(6)-dimethylallyladenosine(37) in tRNA + diphosphate. In terms of biological role, catalyzes the transfer of a dimethylallyl group onto the adenine at position 37 in tRNAs that read codons beginning with uridine, leading to the formation of N6-(dimethylallyl)adenosine (i(6)A). The protein is tRNA dimethylallyltransferase of Pseudomonas fluorescens (strain ATCC BAA-477 / NRRL B-23932 / Pf-5).